The primary structure comprises 585 residues: ATP-dependent lipid A-core flippase (585 aa).

6 helical membrane-spanning segments follow: residues 23 to 43, 64 to 84, 140 to 160, 163 to 183, 247 to 267, and 273 to 293; these read LAFGVAIIGMVGYSLIDAYVI, IAAYFVIPVFIARGIFNFMGT, AFLTLVREGALVFGLLFWMFY, WQLSLVFILIGPLVAMIVSVV, ILSVSSIQVIASVALAVVLYI, and FITDLTPGTFVTVVVAMTMLL. Positions 27–308 constitute an ABC transmembrane type-1 domain; sequence VAIIGMVGYS…LTTVNSEFQK (282 aa). One can recognise an ABC transporter domain in the interval 340 to 576; it reads LEFRDVTFHY…DGAYAQLHKL (237 aa). Residue 374–381 coordinates ATP; the sequence is GRSGSGKS.

Belongs to the ABC transporter superfamily. Lipid exporter (TC 3.A.1.106) family. As to quaternary structure, homodimer.

It is found in the cell inner membrane. It carries out the reaction ATP + H2O + lipid A-core oligosaccharideSide 1 = ADP + phosphate + lipid A-core oligosaccharideSide 2.. Involved in lipopolysaccharide (LPS) biosynthesis. Translocates lipid A-core from the inner to the outer leaflet of the inner membrane. Transmembrane domains (TMD) form a pore in the inner membrane and the ATP-binding domain (NBD) is responsible for energy generation. This Pseudoalteromonas atlantica (strain T6c / ATCC BAA-1087) protein is ATP-dependent lipid A-core flippase.